The sequence spans 196 residues: Large ribosomal subunit protein uL5 (196 aa).

It belongs to the universal ribosomal protein uL5 family. As to quaternary structure, part of the 50S ribosomal subunit; part of the 5S rRNA/L5/L18/L25 subcomplex. Contacts the 5S rRNA and the P site tRNA. Forms a bridge to the 30S subunit in the 70S ribosome.

This is one of the proteins that bind and probably mediate the attachment of the 5S RNA into the large ribosomal subunit, where it forms part of the central protuberance. In the 70S ribosome it contacts protein S13 of the 30S subunit (bridge B1b), connecting the 2 subunits; this bridge is implicated in subunit movement. Contacts the P site tRNA; the 5S rRNA and some of its associated proteins might help stabilize positioning of ribosome-bound tRNAs. The chain is Large ribosomal subunit protein uL5 from Acidothermus cellulolyticus (strain ATCC 43068 / DSM 8971 / 11B).